Reading from the N-terminus, the 404-residue chain is Cysteine desulfurase IscS (404 aa).

Residues 75–76 (AT), Asn-155, Gln-183, and 203–205 (SAH) contribute to the pyridoxal 5'-phosphate site. Lys-206 bears the N6-(pyridoxal phosphate)lysine mark. A pyridoxal 5'-phosphate-binding site is contributed by Thr-243. Residue Cys-328 is the Cysteine persulfide intermediate of the active site. Position 328 (Cys-328) interacts with [2Fe-2S] cluster.

This sequence belongs to the class-V pyridoxal-phosphate-dependent aminotransferase family. NifS/IscS subfamily. In terms of assembly, homodimer. Forms a heterotetramer with IscU, interacts with other sulfur acceptors. Pyridoxal 5'-phosphate serves as cofactor.

The protein localises to the cytoplasm. It carries out the reaction (sulfur carrier)-H + L-cysteine = (sulfur carrier)-SH + L-alanine. It participates in cofactor biosynthesis; iron-sulfur cluster biosynthesis. Its function is as follows. Master enzyme that delivers sulfur to a number of partners involved in Fe-S cluster assembly, tRNA modification or cofactor biosynthesis. Catalyzes the removal of elemental sulfur atoms from cysteine to produce alanine. Functions as a sulfur delivery protein for Fe-S cluster synthesis onto IscU, an Fe-S scaffold assembly protein, as well as other S acceptor proteins. This Shewanella loihica (strain ATCC BAA-1088 / PV-4) protein is Cysteine desulfurase IscS.